Reading from the N-terminus, the 376-residue chain is 1-deoxy-D-xylulose 5-phosphate reductoisomerase (376 aa).

Positions 10, 11, 12, 13, 36, 37, 38, and 118 each coordinate NADPH. 1-deoxy-D-xylulose 5-phosphate is bound at residue K119. E120 is a binding site for NADPH. D144 provides a ligand contact to Mn(2+). The 1-deoxy-D-xylulose 5-phosphate site is built by S145, E146, S170, and H193. E146 is a binding site for Mn(2+). Position 199 (G199) interacts with NADPH. 1-deoxy-D-xylulose 5-phosphate-binding residues include S206, N211, K212, and E215. E215 contributes to the Mn(2+) binding site.

Belongs to the DXR family. It depends on Mg(2+) as a cofactor. The cofactor is Mn(2+).

The catalysed reaction is 2-C-methyl-D-erythritol 4-phosphate + NADP(+) = 1-deoxy-D-xylulose 5-phosphate + NADPH + H(+). It functions in the pathway isoprenoid biosynthesis; isopentenyl diphosphate biosynthesis via DXP pathway; isopentenyl diphosphate from 1-deoxy-D-xylulose 5-phosphate: step 1/6. Functionally, catalyzes the NADPH-dependent rearrangement and reduction of 1-deoxy-D-xylulose-5-phosphate (DXP) to 2-C-methyl-D-erythritol 4-phosphate (MEP). This Macrococcus caseolyticus (strain JCSC5402) (Macrococcoides caseolyticum) protein is 1-deoxy-D-xylulose 5-phosphate reductoisomerase.